We begin with the raw amino-acid sequence, 309 residues long: MSQQLPDVQASSPDVTVGLNRVGVTGVEKLVKLGRRDRDPIVLMAEFEVFVDLPSWRKGADMSRNMEVIDETLETAVSEEAYRVEDVCGDAAELLLEKHDYTTKAEVRMEAEYVTHESTPASEMATQSTADIIASATATEDGTSEEIGARVTGMTVCPCSQGMSASRARETLKQLNVEDDVIEEFLETNPQAGHSQRGHATLTVQSDGAPEVDLNELIEVARDSMSARIYNLAKRPDEDHMTYEAHKDAKFVEDCVRALAEGVVNTFPDLPDDAVVTMKQSNDESIHQHNAHAERVAQLDDLRQEVSED.

It belongs to the GTP cyclohydrolase IV family. Homodimer. Fe(2+) serves as cofactor.

The catalysed reaction is GTP + H2O = 7,8-dihydroneopterin 2',3'-cyclic phosphate + formate + diphosphate + H(+). Its pathway is cofactor biosynthesis; 5,6,7,8-tetrahydromethanopterin biosynthesis. Functionally, converts GTP to 7,8-dihydro-D-neopterin 2',3'-cyclic phosphate, the first intermediate in the biosynthesis of coenzyme methanopterin. This Haloarcula marismortui (strain ATCC 43049 / DSM 3752 / JCM 8966 / VKM B-1809) (Halobacterium marismortui) protein is GTP cyclohydrolase MptA.